Reading from the N-terminus, the 441-residue chain is Protein translocase subunit SecY (441 aa).

A run of 10 helical transmembrane segments spans residues 24–44 (LFVL…VPGI), 77–97 (ILAL…LLAT), 123–143 (ATVV…PNML), 152–172 (FSFY…LMWL), 181–201 (IGNG…PSAI), 215–235 (PLVL…VVFV), 272–292 (VMPA…TQWF), 313–333 (PLYL…YTAM), 373–393 (LIGG…TSAW), and 397–417 (FYFG…FIVQ).

This sequence belongs to the SecY/SEC61-alpha family. As to quaternary structure, component of the Sec protein translocase complex. Heterotrimer consisting of SecY, SecE and SecG subunits. The heterotrimers can form oligomers, although 1 heterotrimer is thought to be able to translocate proteins. Interacts with the ribosome. Interacts with SecDF, and other proteins may be involved. Interacts with SecA.

The protein resides in the cell inner membrane. Its function is as follows. The central subunit of the protein translocation channel SecYEG. Consists of two halves formed by TMs 1-5 and 6-10. These two domains form a lateral gate at the front which open onto the bilayer between TMs 2 and 7, and are clamped together by SecE at the back. The channel is closed by both a pore ring composed of hydrophobic SecY resides and a short helix (helix 2A) on the extracellular side of the membrane which forms a plug. The plug probably moves laterally to allow the channel to open. The ring and the pore may move independently. In Haemophilus influenzae (strain ATCC 51907 / DSM 11121 / KW20 / Rd), this protein is Protein translocase subunit SecY.